Here is a 350-residue protein sequence, read N- to C-terminus: MSRFWSPVVRTLSPYVPGEQPKQDGVVKLNTNENPYPPSPRVLAAIASAAERLRLYPDPRATRLREAIAAYCDVAAEQVFVGNGSDEVLAHTFPALLKHDRPLLFPDVTYSFYPVYCRLYGVAHEEVPLDAAMRIEIADYRRPSSAILLCNPNAPTGIALPRDAVAALLAENPDRLVVVDEAYVDFGAESAVPLVAHHDNLLVIQTFSKSRALAGLRVGFAIGQRPLIEALERVKDSFNSYPVDCLAIAGAVAAIEDEAWFLESRTRIIASRDVLTRDLAQLGFEVLPSLANFVFARHRRRSGADLAAALRQRGVLVRHFKKPRIEDFLRITVGTDEQCGRLIEVLRELI.

Lys209 is modified (N6-(pyridoxal phosphate)lysine).

This sequence belongs to the class-II pyridoxal-phosphate-dependent aminotransferase family. Histidinol-phosphate aminotransferase subfamily. In terms of assembly, homodimer. Pyridoxal 5'-phosphate is required as a cofactor.

It carries out the reaction L-histidinol phosphate + 2-oxoglutarate = 3-(imidazol-4-yl)-2-oxopropyl phosphate + L-glutamate. The protein operates within amino-acid biosynthesis; L-histidine biosynthesis; L-histidine from 5-phospho-alpha-D-ribose 1-diphosphate: step 7/9. The chain is Histidinol-phosphate aminotransferase 1 (hisC1) from Bradyrhizobium diazoefficiens (strain JCM 10833 / BCRC 13528 / IAM 13628 / NBRC 14792 / USDA 110).